The primary structure comprises 227 residues: PKHD-type hydroxylase Neut_0373 (227 aa).

The Fe2OG dioxygenase domain occupies 78-179; sequence KIMPPFFNRY…RIACFMFIQS (102 aa). Histidine 97, aspartate 99, and histidine 160 together coordinate Fe cation. Residue arginine 170 participates in 2-oxoglutarate binding.

The cofactor is Fe(2+). It depends on L-ascorbate as a cofactor.

This chain is PKHD-type hydroxylase Neut_0373, found in Nitrosomonas eutropha (strain DSM 101675 / C91 / Nm57).